The chain runs to 283 residues: Phosphatidylglycerol--prolipoprotein diacylglyceryl transferase (283 aa).

7 consecutive transmembrane segments (helical) span residues 21 to 41, 62 to 82, 106 to 126, 136 to 156, 190 to 210, 218 to 238, and 252 to 272; these read IEVHWYGLAYACAIVIAFYMA, YFLWAELGIVLGARIGYILIY, FIGIRGMSYHGGLVGFLIASY, LLIYLDLIAISLPLGYVFGRI, PSQLIEAFLEGVIVFLMVMWA, GLLIVVYGLGYSLMRFIAEFY, and LSMGQILSLFMVIVSLGILLY. An a 1,2-diacyl-sn-glycero-3-phospho-(1'-sn-glycerol)-binding site is contributed by Arg155.

The protein belongs to the Lgt family.

It is found in the cell inner membrane. It carries out the reaction L-cysteinyl-[prolipoprotein] + a 1,2-diacyl-sn-glycero-3-phospho-(1'-sn-glycerol) = an S-1,2-diacyl-sn-glyceryl-L-cysteinyl-[prolipoprotein] + sn-glycerol 1-phosphate + H(+). It participates in protein modification; lipoprotein biosynthesis (diacylglyceryl transfer). Catalyzes the transfer of the diacylglyceryl group from phosphatidylglycerol to the sulfhydryl group of the N-terminal cysteine of a prolipoprotein, the first step in the formation of mature lipoproteins. This is Phosphatidylglycerol--prolipoprotein diacylglyceryl transferase from Helicobacter acinonychis (strain Sheeba).